The chain runs to 254 residues: Alcohol dehydrogenase 2 (254 aa).

An NAD(+)-binding site is contributed by 10 to 33 (FVAGLGGIGLDTSREIVKSGPKNL). Substrate is bound at residue serine 138. Tyrosine 151 acts as the Proton acceptor in catalysis.

Belongs to the short-chain dehydrogenases/reductases (SDR) family. As to quaternary structure, homodimer.

It catalyses the reaction a primary alcohol + NAD(+) = an aldehyde + NADH + H(+). The catalysed reaction is a secondary alcohol + NAD(+) = a ketone + NADH + H(+). This is Alcohol dehydrogenase 2 (Adh2) from Drosophila montana (Fruit fly).